The sequence spans 545 residues: CTP synthase (545 aa).

The segment at 1–265 (MSKYIFVTGG…LVPIAKQLDL (265 aa)) is amidoligase domain. Serine 13 is a CTP binding site. Serine 13 contributes to the UTP binding site. ATP is bound by residues 14–19 (SLGKGI) and aspartate 71. Aspartate 71 and glutamate 139 together coordinate Mg(2+). CTP contacts are provided by residues 146-148 (DIE), 186-191 (KTKPTQ), and lysine 222. UTP is bound by residues 186-191 (KTKPTQ) and lysine 222. Residues 290–544 (KIAFVGKYLQ…VENAYKCQRS (255 aa)) form the Glutamine amidotransferase type-1 domain. Glycine 355 serves as a coordination point for L-glutamine. The active-site Nucleophile; for glutamine hydrolysis is the cysteine 382. L-glutamine is bound by residues 383 to 386 (LGMQ), glutamate 406, and arginine 473. Catalysis depends on residues histidine 517 and glutamate 519.

The protein belongs to the CTP synthase family. As to quaternary structure, homotetramer.

The catalysed reaction is UTP + L-glutamine + ATP + H2O = CTP + L-glutamate + ADP + phosphate + 2 H(+). The enzyme catalyses L-glutamine + H2O = L-glutamate + NH4(+). It carries out the reaction UTP + NH4(+) + ATP = CTP + ADP + phosphate + 2 H(+). Its pathway is pyrimidine metabolism; CTP biosynthesis via de novo pathway; CTP from UDP: step 2/2. Its activity is regulated as follows. Allosterically activated by GTP, when glutamine is the substrate; GTP has no effect on the reaction when ammonia is the substrate. The allosteric effector GTP functions by stabilizing the protein conformation that binds the tetrahedral intermediate(s) formed during glutamine hydrolysis. Inhibited by the product CTP, via allosteric rather than competitive inhibition. Its function is as follows. Catalyzes the ATP-dependent amination of UTP to CTP with either L-glutamine or ammonia as the source of nitrogen. Regulates intracellular CTP levels through interactions with the four ribonucleotide triphosphates. This Nautilia profundicola (strain ATCC BAA-1463 / DSM 18972 / AmH) protein is CTP synthase.